The sequence spans 106 residues: UPF0145 protein TM_0763 (106 aa).

It belongs to the UPF0145 family.

The protein is UPF0145 protein TM_0763 of Thermotoga maritima (strain ATCC 43589 / DSM 3109 / JCM 10099 / NBRC 100826 / MSB8).